A 929-amino-acid chain; its full sequence is Thrombospondin-3b (929 aa).

Residues 1–22 (MELRKIVPNLLVLYVAVHFSQS) form the signal peptide. Residues 24-192 (EIKVINVLEL…VESVKLALGG (169 aa)) enclose the Laminin G-like domain. N-linked (GlcNAc...) asparagine glycosylation is present at Asn-45. 18 cysteine pairs are disulfide-bonded: Cys-277/Cys-288, Cys-282/Cys-299, Cys-319/Cys-343, Cys-349/Cys-362, Cys-356/Cys-371, Cys-374/Cys-386, Cys-392/Cys-406, Cys-400/Cys-416, Cys-418/Cys-429, Cys-445/Cys-452, Cys-457/Cys-477, Cys-493/Cys-513, Cys-516/Cys-536, Cys-552/Cys-572, Cys-575/Cys-595, Cys-613/Cys-633, Cys-653/Cys-673, and Cys-689/Cys-910. In terms of domain architecture, EGF-like 1; calcium-binding spans 345-384 (DIDECAELSGSCVPNSVCINTVGSFKCGQCKAGFVGNQTV). An N-linked (GlcNAc...) asparagine glycan is attached at Asn-381. The 43-residue stretch at 388 to 430 (ARRTCETLGYSPCDVNSHCVMGRNSDVSCVCNVGWAGNGNICG) folds into the EGF-like 2 domain. TSP type-3 repeat units follow at residues 431–465 (PDSDIDGYPDEPLPCMDNDKHCRADNCANTPNSGQ), 466–501 (EDTDGDGIGDQCDEDADGDGIKNVEDNCRLVPNKDQ), 502–524 (QNSDTDSYGDACDNCPNVPNGDQ), 525–560 (LDTDGNGKGDICDTDIDGDGIPNVLDNCPKIPNPMQ), 561–583 (TDRDGDGVGDACDSCPEVNDPLQ), 584–621 (SDMDNDLVGDVCDTNKDIDGDGYQDTRDNCPEVPNSSQ), 622–661 (LDSDNDGIGDECDDDDDNDGIPDILPPGPDNCRLVPNPSQ), and 662–697 (IDTDANGVGDVCETDFDNDKVTDLLDACPESAEVTM). Residues 602–613 (DGDGYQDTRDNC) show a composition bias toward basic and acidic residues. Positions 602–651 (DGDGYQDTRDNCPEVPNSSQLDSDNDGIGDECDDDDDNDGIPDILPPGPD) are disordered. Asn-618 is a glycosylation site (N-linked (GlcNAc...) asparagine). Residues 624-641 (SDNDGIGDECDDDDDNDG) show a composition bias toward acidic residues. Residues 701–915 (RAFQTVILDP…LGYRCNDSIP (215 aa)) enclose the TSP C-terminal domain. Asn-911 is a glycosylation site (N-linked (GlcNAc...) asparagine).

The protein belongs to the thrombospondin family. In terms of assembly, oligomer; disulfide-linked.

Functionally, adhesive glycoprotein that mediates cell-to-cell and cell-to-matrix interactions. Can bind to fibrinogen, fibronectin, laminin and type V collagen. The protein is Thrombospondin-3b of Danio rerio (Zebrafish).